The chain runs to 60 residues: Probable tautomerase SAG1079 (60 aa).

Pro2 acts as the Proton acceptor; via imino nitrogen in catalysis.

It belongs to the 4-oxalocrotonate tautomerase family.

This Streptococcus agalactiae serotype V (strain ATCC BAA-611 / 2603 V/R) protein is Probable tautomerase SAG1079.